Consider the following 225-residue polypeptide: Deoxyribose-phosphate aldolase (225 aa).

D96 serves as the catalytic Proton donor/acceptor. The active-site Schiff-base intermediate with acetaldehyde is the K157. K185 serves as the catalytic Proton donor/acceptor.

It belongs to the DeoC/FbaB aldolase family. DeoC type 1 subfamily.

It localises to the cytoplasm. It carries out the reaction 2-deoxy-D-ribose 5-phosphate = D-glyceraldehyde 3-phosphate + acetaldehyde. The protein operates within carbohydrate degradation; 2-deoxy-D-ribose 1-phosphate degradation; D-glyceraldehyde 3-phosphate and acetaldehyde from 2-deoxy-alpha-D-ribose 1-phosphate: step 2/2. Catalyzes a reversible aldol reaction between acetaldehyde and D-glyceraldehyde 3-phosphate to generate 2-deoxy-D-ribose 5-phosphate. The polypeptide is Deoxyribose-phosphate aldolase (Microcystis aeruginosa (strain NIES-843 / IAM M-2473)).